We begin with the raw amino-acid sequence, 133 residues long: MNALRGLLNKYTGNQIVFSNKYATTFFEKFPKLAFLNNVTNLAPMMKWSLSIVPITQILSGTKLPENIDVYQASSLCATGSIWTYYATLISPQNTGTRMLAACNAAMAACHGYNIYRRTKWEKSQIIPIENKN.

3 consecutive transmembrane segments (helical) span residues 39 to 55 (VTNLAPMMKWSLSIVPI), 73 to 91 (ASSLCATGSIWTYYATLIS), and 99 to 116 (MLAACNAAMAACHGYNIY).

Belongs to the mitochondrial pyruvate carrier (MPC) (TC 2.A.105) family.

The protein resides in the mitochondrion inner membrane. May mediate the uptake of pyruvate into mitochondria. The polypeptide is Probable mitochondrial pyruvate carrier 2 (Dictyostelium discoideum (Social amoeba)).